A 271-amino-acid chain; its full sequence is Tryptophan synthase alpha chain (271 aa).

Residues glutamate 49 and aspartate 60 each act as proton acceptor in the active site.

The protein belongs to the TrpA family. As to quaternary structure, tetramer of two alpha and two beta chains.

It catalyses the reaction (1S,2R)-1-C-(indol-3-yl)glycerol 3-phosphate + L-serine = D-glyceraldehyde 3-phosphate + L-tryptophan + H2O. It participates in amino-acid biosynthesis; L-tryptophan biosynthesis; L-tryptophan from chorismate: step 5/5. The alpha subunit is responsible for the aldol cleavage of indoleglycerol phosphate to indole and glyceraldehyde 3-phosphate. The polypeptide is Tryptophan synthase alpha chain (Leptothrix cholodnii (strain ATCC 51168 / LMG 8142 / SP-6) (Leptothrix discophora (strain SP-6))).